A 671-amino-acid chain; its full sequence is DNA polymerase kappa (671 aa).

Positions 105–285 (WLHVDMDAFY…LPVRKIGGIG (181 aa)) constitute a UmuC domain. Mg(2+) contacts are provided by D109 and D200. Residue E201 is part of the active site. A UBZ3-type zinc finger spans residues 576–613 (YWIDGYKCVLCGIELPPSFVEERQEHSDFHLAQRLQNE). Zn(2+)-binding residues include C583, C586, H601, and H605. Residues 607–671 (AQRLQNEETG…NQNSNETQRK (65 aa)) form a disordered region. Residues 625–632 (KRRILGKE) carry the Nuclear localization signal motif. Over residues 629 to 650 (LGKEKVNSKPKKQKPDQKDSSK) the composition is skewed to basic and acidic residues. Residues 659–671 (TKSNQNSNETQRK) show a composition bias toward polar residues.

It belongs to the DNA polymerase type-Y family. Mg(2+) is required as a cofactor. In terms of tissue distribution, expressed in roots, leaves, stems, flowers and siliques. Present in endoreduplicating cells.

It localises to the nucleus. The enzyme catalyses DNA(n) + a 2'-deoxyribonucleoside 5'-triphosphate = DNA(n+1) + diphosphate. Unable to bypass a single 1,N(6)-ethenoadenine (epsilon-dA) or an abasic site lesions in DNA templates. Functionally, template-directed low-fidelity DNA polymerase specifically involved in DNA repair. Able to extend primer-terminal mispairs, and to insert nucleotides opposite to a single 7,8-dihydro-8-oxoGuanine (8-oxoG) lesion and moderately extend from the resulting primer end, thus leading to both error-free and error-prone bypass of 8-oxoG DNA lesions. Probably involved in consecutive DNA replication cycles in the absence of mitosis. Binds preferentially template-primer DNA substrates or single-stranded DNA. Plays an important role in translesion synthesis, where the normal high-fidelity DNA polymerases cannot proceed and DNA synthesis stalls. Depending on the context, it inserts the correct base, but causes frequent base transitions, transversions and frameshifts. The protein is DNA polymerase kappa of Arabidopsis thaliana (Mouse-ear cress).